The primary structure comprises 1636 residues: Tyrosine-protein phosphatase non-receptor type 23 (1636 aa).

The 387-residue stretch at 8–394 (PMIWLDLKEA…AKIEDKNEVL (387 aa)) folds into the BRO1 domain. TPR repeat units lie at residues 250–283 (AVAH…LNEA) and 374–407 (EEKA…DPET). Residues 550–623 (KAVLQNLKRI…VYLEQNLAAQ (74 aa)) are a coiled coil. Basic and acidic residues predominate over residues 701–714 (EAARQQLLDRELKK). Disordered stretches follow at residues 701–812 (EAAR…GPHA) and 888–1151 (QAPI…AAEG). A Phosphoserine modification is found at S733. Residues 770–1130 (HFPPSPFPSS…SSSPESQHGG (361 aa)) form a his region. Pro residues-rich tracts occupy residues 898 to 922 (RPNP…PTPY) and 950 to 962 (RIGP…PQPH). At R950 the chain carries Omega-N-methylarginine. 6 tandem repeats follow at residues 953 to 954 (PQ), 955 to 956 (PQ), 957 to 958 (PH), 959 to 960 (PQ), 961 to 962 (PH), and 963 to 964 (PS). Residues 953–964 (PQPQPHPQPHPS) form a 6 X 2 AA approximate tandem repeats of P-Q region. Composition is skewed to pro residues over residues 983–1002 (LFPP…PYAP), 1036–1050 (FPSP…PPLA), and 1083–1109 (HLVP…PPPC). Polar residues predominate over residues 1120 to 1131 (LSSSPESQHGGT). A phosphoserine mark is found at S1122 and S1123. The residue at position 1131 (T1131) is a Phosphothreonine. Residues 1192–1452 (DTVWRELQDA…RFCYEAVVRH (261 aa)) form the Tyrosine-protein phosphatase domain. C1392 serves as the catalytic Phosphocysteine intermediate. Residues 1513 to 1636 (LESPVASLPG…LDPLWTLNKT (124 aa)) form a disordered region. Composition is skewed to pro residues over residues 1523 to 1533 (PAEPPGLPPAS) and 1542 to 1556 (SSSP…PEAP). Residues 1567–1587 (APSSGPPSSSLELLASLTPEA) show a composition bias toward low complexity. Position 1615 is an omega-N-methylarginine (R1615).

It belongs to the protein-tyrosine phosphatase family. Non-receptor class subfamily. In terms of assembly, interacts with GRAP2 and GRB2. Interacts with UBAP1. Interacts with CHMP4B.

The protein resides in the nucleus. It is found in the cytoplasm. The protein localises to the cytoplasmic vesicle. Its subcellular location is the endosome. It localises to the cytoskeleton. The protein resides in the cilium basal body. It is found in the early endosome. The enzyme catalyses O-phospho-L-tyrosyl-[protein] + H2O = L-tyrosyl-[protein] + phosphate. In terms of biological role, plays a role in sorting of endocytic ubiquitinated cargos into multivesicular bodies (MVBs) via its interaction with the ESCRT-I complex (endosomal sorting complex required for transport I), and possibly also other ESCRT complexes. May act as a negative regulator of Ras-mediated mitogenic activity. Plays a role in ciliogenesis. In Homo sapiens (Human), this protein is Tyrosine-protein phosphatase non-receptor type 23 (PTPN23).